Reading from the N-terminus, the 786-residue chain is Sucrose synthase (786 aa).

The GT-B glycosyltransferase stretch occupies residues 259-736 (MIFSLVVLSP…ALKRVEERYN (478 aa)).

The protein belongs to the glycosyltransferase 1 family. Homotetramer.

It carries out the reaction an NDP-alpha-D-glucose + D-fructose = a ribonucleoside 5'-diphosphate + sucrose + H(+). In terms of biological role, catalyzes the reversible conversion of sucrose and a nucleotide disphosphate (NDP) into fructose and NDP-glucose; although the reaction is freely reversible in vitro, the physiological reaction seems to be sucrose cleavage. Unlike characterized plant enzymes prefers ADP as a cosubstrate, whereas plants prefer UDP. Its preference for ADP over UDP suggests it may directly link sucrose and glycogen metabolism. The polypeptide is Sucrose synthase (Denitrovibrio acetiphilus (strain DSM 12809 / NBRC 114555 / N2460)).